Reading from the N-terminus, the 97-residue chain is Histone H1.C2 (97 aa).

A disordered region spans residues 24–97 (AAVPPKKAAP…KKAVKKAPKK (74 aa)). The span at 31–97 (AAPKKAVAKK…KKAVKKAPKK (67 aa)) shows a compositional bias: basic residues.

Its subcellular location is the nucleus. The protein localises to the chromosome. In Trypanosoma cruzi, this protein is Histone H1.C2.